The primary structure comprises 410 residues: Cysteine desulfurase IscS (410 aa).

Pyridoxal 5'-phosphate-binding positions include 80-81 (AT), N160, Q188, and 208-210 (SGH). An N6-(pyridoxal phosphate)lysine modification is found at K211. Pyridoxal 5'-phosphate is bound at residue T248. The Cysteine persulfide intermediate role is filled by C334. C334 contacts [2Fe-2S] cluster.

Belongs to the class-V pyridoxal-phosphate-dependent aminotransferase family. NifS/IscS subfamily. Homodimer. Forms a heterotetramer with IscU, interacts with other sulfur acceptors. Pyridoxal 5'-phosphate serves as cofactor.

The protein localises to the cytoplasm. It catalyses the reaction (sulfur carrier)-H + L-cysteine = (sulfur carrier)-SH + L-alanine. Its pathway is cofactor biosynthesis; iron-sulfur cluster biosynthesis. Its function is as follows. Master enzyme that delivers sulfur to a number of partners involved in Fe-S cluster assembly, tRNA modification or cofactor biosynthesis. Catalyzes the removal of elemental sulfur atoms from cysteine to produce alanine. Functions as a sulfur delivery protein for Fe-S cluster synthesis onto IscU, an Fe-S scaffold assembly protein, as well as other S acceptor proteins. The polypeptide is Cysteine desulfurase IscS (Rickettsia peacockii (strain Rustic)).